The sequence spans 955 residues: E3 ubiquitin-protein ligase MIB2 (955 aa).

Methionine 1 is modified (N-acetylmethionine). Positions 1–80 constitute an MIB/HERC2 1 domain; it reads MDPDPQAGVQ…AHDLLLYDNA (80 aa). The ZZ-type zinc-finger motif lies at 86-138; it reads HPNIICDCCKKHGLRGMRWKCRVCLDYDLCTQCYMHNKHELAHAFDRYETAHS. Residues cysteine 91, cysteine 94, cysteine 106, cysteine 109, cysteine 115, cysteine 118, histidine 124, and histidine 128 each coordinate Zn(2+). Residues 149 to 227 form the MIB/HERC2 2 domain; that stretch reads LPRIPLRGIF…KVDLKCVGEA (79 aa). Residue serine 251 is modified to Phosphoserine. ANK repeat units lie at residues 464–493, 497–526, 530–559, 563–595, 599–628, 633–663, 667–696, 700–728, and 769–798; these read QGRT…GVDL, EGNT…RADA, TQST…DVNL, HSDT…DVTA, QGFT…QLVD, DGFT…DVNV, KLQS…SVNA, EGDT…DPGP, and RGRS…ERQA. RING-type zinc fingers lie at residues 832 to 867 and 911 to 944; these read CLVC…IRCQ and CPIC…PICR.

As to quaternary structure, interacts with actin monomer. Ubiquitinated. Possibly via autoubiquitination. As to expression, expressed in skeletal muscle, and to a lesser extent in heart, brain and kidney.

The protein localises to the cytoplasm. It localises to the endosome. The catalysed reaction is S-ubiquitinyl-[E2 ubiquitin-conjugating enzyme]-L-cysteine + [acceptor protein]-L-lysine = [E2 ubiquitin-conjugating enzyme]-L-cysteine + N(6)-ubiquitinyl-[acceptor protein]-L-lysine.. It functions in the pathway protein modification; protein ubiquitination. E3 ubiquitin-protein ligase that mediates ubiquitination of Delta receptors, which act as ligands of Notch proteins. Positively regulates the Delta-mediated Notch signaling by ubiquitinating the intracellular domain of Delta, leading to endocytosis of Delta receptors. This chain is E3 ubiquitin-protein ligase MIB2, found in Homo sapiens (Human).